We begin with the raw amino-acid sequence, 129 residues long: Small ribosomal subunit protein uS11 (129 aa).

The protein belongs to the universal ribosomal protein uS11 family. In terms of assembly, part of the 30S ribosomal subunit. Interacts with proteins S7 and S18. Binds to IF-3.

In terms of biological role, located on the platform of the 30S subunit, it bridges several disparate RNA helices of the 16S rRNA. Forms part of the Shine-Dalgarno cleft in the 70S ribosome. The protein is Small ribosomal subunit protein uS11 of Symbiobacterium thermophilum (strain DSM 24528 / JCM 14929 / IAM 14863 / T).